The primary structure comprises 141 residues: Holo-[acyl-carrier-protein] synthase (141 aa).

The Mg(2+) site is built by aspartate 7 and glutamate 57.

The protein belongs to the P-Pant transferase superfamily. AcpS family. It depends on Mg(2+) as a cofactor.

The protein resides in the cytoplasm. The catalysed reaction is apo-[ACP] + CoA = holo-[ACP] + adenosine 3',5'-bisphosphate + H(+). Transfers the 4'-phosphopantetheine moiety from coenzyme A to a Ser of acyl-carrier-protein. This chain is Holo-[acyl-carrier-protein] synthase, found in Corynebacterium efficiens (strain DSM 44549 / YS-314 / AJ 12310 / JCM 11189 / NBRC 100395).